Reading from the N-terminus, the 252-residue chain is Trans-aconitate 2-methyltransferase (252 aa).

The protein belongs to the methyltransferase superfamily. Tam family.

The protein localises to the cytoplasm. The enzyme catalyses trans-aconitate + S-adenosyl-L-methionine = (E)-3-(methoxycarbonyl)pent-2-enedioate + S-adenosyl-L-homocysteine. Functionally, catalyzes the S-adenosylmethionine monomethyl esterification of trans-aconitate. The protein is Trans-aconitate 2-methyltransferase of Enterobacter sp. (strain 638).